The primary structure comprises 301 residues: Quinolinate synthase (301 aa).

His-21 and Ser-38 together coordinate iminosuccinate. Residue Cys-83 coordinates [4Fe-4S] cluster. Iminosuccinate is bound by residues 109–111 (YIN) and Ser-126. Cys-169 serves as a coordination point for [4Fe-4S] cluster. Iminosuccinate is bound by residues 195-197 (HPE) and Thr-212. Residue Cys-257 participates in [4Fe-4S] cluster binding.

It belongs to the quinolinate synthase family. Type 2 subfamily. It depends on [4Fe-4S] cluster as a cofactor.

It localises to the cytoplasm. The catalysed reaction is iminosuccinate + dihydroxyacetone phosphate = quinolinate + phosphate + 2 H2O + H(+). Its pathway is cofactor biosynthesis; NAD(+) biosynthesis; quinolinate from iminoaspartate: step 1/1. Catalyzes the condensation of iminoaspartate with dihydroxyacetone phosphate to form quinolinate. The polypeptide is Quinolinate synthase (Clostridium perfringens (strain SM101 / Type A)).